The chain runs to 375 residues: INO80 complex subunit B (375 aa).

Residues 1-84 form a disordered region; sequence MSACVPTVSS…GPTLQTPAKP (84 aa). Over residues 50–68 the composition is skewed to basic residues; it reads HGVHKKKHKKHKKKHKKKH. A phosphoserine mark is found at Ser114, Ser116, Ser144, Ser147, and Ser149. Disordered stretches follow at residues 143 to 165, 201 to 220, 262 to 287, and 312 to 331; these read DSNL…EEEE, LQKA…GGGC, TAAP…AAPA, and PTAV…CSVP. Residues 230–262 are a coiled coil; the sequence is LLKREERARKRRLQAARRAEEHKNQTIERLTKT. Residues 324–355 form an HIT-type zinc finger; it reads PAPRCSVPGCPHPRRYACSRTGQALCSLQCYR.

In terms of assembly, component of the chromatin remodeling INO80 complex; specifically part of a complex module associated with the helicase ATP-binding and the helicase C-terminal domain of INO80. Interacts with RP9. Expressed strongly in the testis and moderately in the kidney, skeletal muscle, liver and lung.

It localises to the nucleus. The protein localises to the nucleolus. In terms of biological role, proposed core component of the chromatin remodeling INO80 complex which is involved in transcriptional regulation, DNA replication and probably DNA repair. The protein is INO80 complex subunit B (Ino80b) of Mus musculus (Mouse).